A 276-amino-acid chain; its full sequence is Octanoyltransferase LipM (276 aa).

One can recognise a BPL/LPL catalytic domain in the interval 32 to 247 (GEVAPTLRFY…GFEDALQLTF (216 aa)). The active-site Acyl-thioester intermediate is cysteine 149.

The protein belongs to the octanoyltransferase LipM family. As to quaternary structure, monomer.

The enzyme catalyses octanoyl-[ACP] + L-lysyl-[protein] = N(6)-octanoyl-L-lysyl-[protein] + holo-[ACP] + H(+). The protein operates within protein modification; protein lipoylation via endogenous pathway; protein N(6)-(lipoyl)lysine from octanoyl-[acyl-carrier-protein]. Its function is as follows. Catalyzes the transfer of endogenously produced octanoic acid from octanoyl-acyl-carrier-protein onto the lipoyl domain of GcvH, an intermediate carrier during protein lipoylation. In Exiguobacterium sibiricum (strain DSM 17290 / CCUG 55495 / CIP 109462 / JCM 13490 / 255-15), this protein is Octanoyltransferase LipM.